Reading from the N-terminus, the 1117-residue chain is Endogenous retrovirus group K member 9 Pol protein (1117 aa).

G2 is lipidated: N-myristoyl glycine. A Reverse transcriptase domain is found at 58-195 (KDWKRIGKEL…AGQVPVTLQP (138 aa)). The interval 165-264 (GKGPELVGPS…APPSRQGSEL (100 aa)) is disordered. A compositionally biased stretch (pro residues) spans 232 to 247 (GMPPAPQGRAPYPQPP). 2 consecutive CCHC-type zinc fingers follow at residues 544 to 561 (GKCYNCGQIGHLKKNCPV) and 580 to 597 (DLCPRCKKGKHWASQCRS). The disordered stretch occupies residues 598–629 (KFDKNGQPLSGNEQRGQPQAPQQTGAFPIQPF). Polar residues predominate over residues 604–622 (QPLSGNEQRGQPQAPQQTG). Residues 800–875 (FEGLVDTGAD…IPLNLWGRDL (76 aa)) form the Peptidase A2 domain. The active site involves D805. The region spanning 890–936 (YSPTSQKIMTKRGYIPGKGLGKNEDGIKIPFEAKINQKREGIGYPFL) is the G-patch domain.

Belongs to the beta type-B retroviral polymerase family. HERV class-II K(HML-2) pol subfamily. In terms of processing, myristoylation is essential for retroviral assembly. Alteration of the glycine residue leads to a block in the budding of particles and an accumulation of Gag inside the cell. Specific enzymatic cleavages may yield mature proteins.

The protein localises to the cell membrane. It catalyses the reaction Processing at the authentic HIV-1 PR recognition site and release of the mature p17 matrix and the p24 capsid protein, as a result of the cleavage of the -SQNY-|-PIVQ- cleavage site.. The catalysed reaction is DNA(n) + a 2'-deoxyribonucleoside 5'-triphosphate = DNA(n+1) + diphosphate. It carries out the reaction Endonucleolytic cleavage to 5'-phosphomonoester.. In terms of biological role, the products of the Gag polyproteins of infectious retroviruses perform highly complex orchestrated tasks during the assembly, budding, maturation, and infection stages of the viral replication cycle. During viral assembly, the proteins form membrane associations and self-associations that ultimately result in budding of an immature virion from the infected cell. Gag precursors also function during viral assembly to selectively bind and package two plus strands of genomic RNA. Endogenous Gag proteins may have kept, lost or modified their original function during evolution. Early post-infection, the reverse transcriptase converts the viral RNA genome into double-stranded viral DNA. The RNase H domain of the reverse transcriptase performs two functions. It degrades the RNA template and specifically removes the RNA primer from the RNA/DNA hybrid. Following nuclear import, the integrase catalyzes the insertion of the linear, double-stranded viral DNA into the host cell chromosome. Endogenous Pol proteins may have kept, lost or modified their original function during evolution. In Homo sapiens (Human), this protein is Endogenous retrovirus group K member 9 Pol protein (ERVK-9).